Consider the following 83-residue polypeptide: NAD(P)H-quinone oxidoreductase subunit L (83 aa).

A run of 2 helical transmembrane segments spans residues 15–35 and 53–73; these read LFVL…VPLA and LGVY…APFI.

It belongs to the complex I NdhL subunit family. As to quaternary structure, NDH-1 can be composed of about 15 different subunits; different subcomplexes with different compositions have been identified which probably have different functions.

It is found in the cellular thylakoid membrane. The catalysed reaction is a plastoquinone + NADH + (n+1) H(+)(in) = a plastoquinol + NAD(+) + n H(+)(out). The enzyme catalyses a plastoquinone + NADPH + (n+1) H(+)(in) = a plastoquinol + NADP(+) + n H(+)(out). Functionally, NDH-1 shuttles electrons from an unknown electron donor, via FMN and iron-sulfur (Fe-S) centers, to quinones in the respiratory and/or the photosynthetic chain. The immediate electron acceptor for the enzyme in this species is believed to be plastoquinone. Couples the redox reaction to proton translocation, and thus conserves the redox energy in a proton gradient. Cyanobacterial NDH-1 also plays a role in inorganic carbon-concentration. This is NAD(P)H-quinone oxidoreductase subunit L from Synechococcus sp. (strain CC9902).